The following is a 218-amino-acid chain: Trimethylamine corrinoid protein 2 (218 aa).

The region spanning 1–92 is the B12-binding N-terminal domain; that stretch reads MAGKEEIIAK…EMEKRKSQTK (92 aa). The region spanning 94-218 is the B12-binding domain; it reads LGTVIIGTIE…AKVKAALKVG (125 aa). Histidine 107 is a binding site for methylcob(III)alamin.

The protein belongs to the methylamine corrinoid protein family. Can form a complex with MttB.

The protein operates within one-carbon metabolism; methanogenesis from trimethylamine. Functionally, acts probably as a methyl group carrier between MttB and either MtbA or MtaA. This chain is Trimethylamine corrinoid protein 2 (mttC2), found in Methanosarcina mazei (strain ATCC BAA-159 / DSM 3647 / Goe1 / Go1 / JCM 11833 / OCM 88) (Methanosarcina frisia).